The chain runs to 659 residues: Sodium/nucleoside cotransporter 2 (659 aa).

Residues 1–10 (MAKSEGRKSA) show a composition bias toward basic and acidic residues. Residues 1–22 (MAKSEGRKSASQDTSENGMENP) are disordered. The residue at position 46 (S46) is a Phosphoserine. 14 helical membrane-spanning segments follow: residues 81 to 101 (ILLG…CILN), 105 to 124 (ALAL…CHFL), 149 to 167 (KRVF…LALD), 173 to 193 (EQLI…ACSK), 201 to 221 (RTVF…IRTE), 234 to 254 (IQIF…DTLV), 261 to 281 (QSLP…YLGL), 296 to 315 (TMGT…FVGM), 337 to 356 (VMTG…FISF), 363 to 382 (LISA…KLVY), 424 to 444 (VAAN…TLSW), 455 to 475 (TFQV…GVQW), 530 to 550 (ATFS…LGGL), and 568 to 588 (ALFT…ILYV).

This sequence belongs to the concentrative nucleoside transporter (CNT) (TC 2.A.41) family. As to expression, expressed in liver (in bile canalicular membrane vesicles (CMV) but not in sinusoidal vesicles), jejunum, spleen and heart. Also expressed in brain and skeletal muscle. Not expressed in kidney, muscle and lung.

The protein resides in the membrane. It localises to the apicolateral cell membrane. It catalyses the reaction adenosine(out) + Na(+)(out) = adenosine(in) + Na(+)(in). The enzyme catalyses inosine(out) + Na(+)(out) = inosine(in) + Na(+)(in). The catalysed reaction is guanosine(out) + Na(+)(out) = guanosine(in) + Na(+)(in). It carries out the reaction uridine(out) + Na(+)(out) = uridine(in) + Na(+)(in). Inhibited by formycin B, partially inhibited by purine analog ara-A. Functionally, sodium-dependent and purine-selective. Exhibits the transport characteristics of the nucleoside transport system cif or N1 subtype (N1/cif) (selective for purine nucleosides and uridine). Accepts purine, analogs of purine nucleosides and uridine, and exhibits high affinity for adenosine. May contribute to regulate the transport of organic compounds in testes across the blood-testis-barrier. The polypeptide is Sodium/nucleoside cotransporter 2 (Slc28a2) (Rattus norvegicus (Rat)).